A 151-amino-acid chain; its full sequence is 3-dehydroquinate dehydratase (151 aa).

The active-site Proton acceptor is Y24. The substrate site is built by N76, H82, and D89. H102 serves as the catalytic Proton donor. Substrate-binding positions include 103–104 (VS) and R113.

Belongs to the type-II 3-dehydroquinase family. In terms of assembly, homododecamer.

It catalyses the reaction 3-dehydroquinate = 3-dehydroshikimate + H2O. It participates in metabolic intermediate biosynthesis; chorismate biosynthesis; chorismate from D-erythrose 4-phosphate and phosphoenolpyruvate: step 3/7. Its function is as follows. Catalyzes a trans-dehydration via an enolate intermediate. The polypeptide is 3-dehydroquinate dehydratase (Rhodopseudomonas palustris (strain ATCC BAA-98 / CGA009)).